The sequence spans 244 residues: Acidic leucine-rich nuclear phosphoprotein 32 family member A (244 aa).

4 LRR repeats span residues 18 to 41, 43 to 64, 65 to 87, and 89 to 110; these read DVKE…TDEF, GLEF…PKLN, KLKK…AEKC, and NLTH…EPLK. An LRRCT domain is found at 123–161; that stretch reads CEVTNLNDYRENLFKLLPQLTYLDGYDRDDKEAPDSDAE. The tract at residues 148-244 is disordered; sequence YDRDDKEAPD…DQDDEGEDDD (97 aa). Acidic residues predominate over residues 157–227; that stretch reads DSDAEGYVEG…EEDEGDEEAE (71 aa).

It belongs to the ANP32 family. Phosphorylated on serine residues.

The protein localises to the nucleus. Its subcellular location is the cytoplasm. The protein resides in the endoplasmic reticulum. Its function is as follows. Implicated in a number of cellular processes, including proliferation, differentiation, caspase-dependent and caspase-independent apoptosis, suppression of transformation (tumor suppressor), inhibition of protein phosphatase 2A, regulation of mRNA trafficking and stability, and inhibition of acetyltransferases as part of the INHAT (inhibitor of histone acetyltransferases) complex. This is Acidic leucine-rich nuclear phosphoprotein 32 family member A (anp32a) from Xenopus laevis (African clawed frog).